Consider the following 609-residue polypeptide: UvrABC system protein C (609 aa).

A GIY-YIG domain is found at 13 to 91 (HEPGVYRMYD…IKLYQPRYNV (79 aa)). The UVR domain occupies 201–236 (QQVLDYLIGKMEQASRNLDFEQAARYRDQIQAVRSV).

The protein belongs to the UvrC family. Interacts with UvrB in an incision complex.

The protein localises to the cytoplasm. In terms of biological role, the UvrABC repair system catalyzes the recognition and processing of DNA lesions. UvrC both incises the 5' and 3' sides of the lesion. The N-terminal half is responsible for the 3' incision and the C-terminal half is responsible for the 5' incision. This Haemophilus influenzae (strain ATCC 51907 / DSM 11121 / KW20 / Rd) protein is UvrABC system protein C.